Reading from the N-terminus, the 528-residue chain is Peptide chain release factor 3 (528 aa).

Residues 10-278 form the tr-type G domain; sequence DRRRTFGIIS…AFVQMAPPPH (269 aa). GTP is bound by residues 19 to 26, 87 to 91, and 141 to 144; these read SHPDAGKT, DTPGH, and NKLD.

It belongs to the TRAFAC class translation factor GTPase superfamily. Classic translation factor GTPase family. PrfC subfamily.

Its subcellular location is the cytoplasm. In terms of biological role, increases the formation of ribosomal termination complexes and stimulates activities of RF-1 and RF-2. It binds guanine nucleotides and has strong preference for UGA stop codons. It may interact directly with the ribosome. The stimulation of RF-1 and RF-2 is significantly reduced by GTP and GDP, but not by GMP. This Syntrophobacter fumaroxidans (strain DSM 10017 / MPOB) protein is Peptide chain release factor 3.